The chain runs to 487 residues: Betaine aldehyde dehydrogenase (487 aa).

Ile27 and Asp93 together coordinate K(+). 149–151 (GAW) is a binding site for NAD(+). Lys161 functions as the Charge relay system in the catalytic mechanism. NAD(+)-binding positions include 175–178 (KPSE) and 228–231 (SVPT). Residue Leu243 participates in K(+) binding. The active-site Proton acceptor is the Glu249. NAD(+)-binding residues include Gly251, Cys283, and Glu384. Residue Cys283 is the Nucleophile of the active site. At Cys283 the chain carries Cysteine sulfenic acid (-SOH). Residues Lys454 and Gly457 each contribute to the K(+) site. Glu461 (charge relay system) is an active-site residue.

This sequence belongs to the aldehyde dehydrogenase family. In terms of assembly, dimer of dimers. Requires K(+) as cofactor.

It carries out the reaction betaine aldehyde + NAD(+) + H2O = glycine betaine + NADH + 2 H(+). It functions in the pathway amine and polyamine biosynthesis; betaine biosynthesis via choline pathway; betaine from betaine aldehyde: step 1/1. In terms of biological role, involved in the biosynthesis of the osmoprotectant glycine betaine. Catalyzes the irreversible oxidation of betaine aldehyde to the corresponding acid. The polypeptide is Betaine aldehyde dehydrogenase (Brucella abortus (strain S19)).